Reading from the N-terminus, the 55-residue chain is Large ribosomal subunit protein bL33 (55 aa).

It belongs to the bacterial ribosomal protein bL33 family.

In Vibrio cholerae serotype O1 (strain ATCC 39541 / Classical Ogawa 395 / O395), this protein is Large ribosomal subunit protein bL33.